The following is a 376-amino-acid chain: Alanine racemase (376 aa).

Lys44 functions as the Proton acceptor; specific for D-alanine in the catalytic mechanism. An N6-(pyridoxal phosphate)lysine modification is found at Lys44. Arg139 contacts substrate. Tyr271 acts as the Proton acceptor; specific for L-alanine in catalysis. Met319 is a binding site for substrate.

It belongs to the alanine racemase family. The cofactor is pyridoxal 5'-phosphate.

It catalyses the reaction L-alanine = D-alanine. The protein operates within amino-acid biosynthesis; D-alanine biosynthesis; D-alanine from L-alanine: step 1/1. Catalyzes the interconversion of L-alanine and D-alanine. May also act on other amino acids. The sequence is that of Alanine racemase (alr) from Bordetella petrii (strain ATCC BAA-461 / DSM 12804 / CCUG 43448).